The sequence spans 449 residues: Biotin carboxylase (449 aa).

One can recognise a Biotin carboxylation domain in the interval 4 to 448 (MIEKVLIANR…NIHYLEKMLG (445 aa)). ATP is bound by residues lysine 119, lysine 162, 168 to 169 (GG), 204 to 207 (EKYL), histidine 212, and histidine 239. Residues 123 to 320 (IAAMKAAGVP…IVKEQILIAA (198 aa)) enclose the ATP-grasp domain. Position 241 (lysine 241) interacts with hydrogencarbonate. ATP-binding residues include glutamate 279 and glutamate 291. Residues glutamate 279, glutamate 291, and asparagine 293 each coordinate Mg(2+). Residues glutamate 279, glutamate 291, and asparagine 293 each coordinate Mn(2+). The hydrogencarbonate site is built by arginine 295, valine 298, and arginine 341. Arginine 295 is a catalytic residue. Arginine 341 serves as a coordination point for biotin.

Acetyl-CoA carboxylase is a heterohexamer of biotin carboxyl carrier protein, biotin carboxylase and the two subunits of carboxyl transferase in a 2:2 complex. Mg(2+) serves as cofactor. Mn(2+) is required as a cofactor.

It catalyses the reaction N(6)-biotinyl-L-lysyl-[protein] + hydrogencarbonate + ATP = N(6)-carboxybiotinyl-L-lysyl-[protein] + ADP + phosphate + H(+). It participates in lipid metabolism; malonyl-CoA biosynthesis; malonyl-CoA from acetyl-CoA: step 1/1. This protein is a component of the acetyl coenzyme A carboxylase complex; first, biotin carboxylase catalyzes the carboxylation of the carrier protein and then the transcarboxylase transfers the carboxyl group to form malonyl-CoA. In Allochromatium vinosum (strain ATCC 17899 / DSM 180 / NBRC 103801 / NCIMB 10441 / D) (Chromatium vinosum), this protein is Biotin carboxylase (accC).